A 54-amino-acid polypeptide reads, in one-letter code: Photosystem II reaction center protein L (54 aa).

Residues 33-53 (SLFWGLLLIFVLAVLFSSYIF) traverse the membrane as a helical segment.

It belongs to the PsbL family. In terms of assembly, PSII is composed of 1 copy each of membrane proteins PsbA, PsbB, PsbC, PsbD, PsbE, PsbF, PsbH, PsbI, PsbJ, PsbK, PsbL, PsbM, PsbT, PsbX, PsbY, PsbZ, Psb30/Ycf12, at least 3 peripheral proteins of the oxygen-evolving complex and a large number of cofactors. It forms dimeric complexes.

It is found in the plastid. The protein localises to the chloroplast thylakoid membrane. Its function is as follows. One of the components of the core complex of photosystem II (PSII). PSII is a light-driven water:plastoquinone oxidoreductase that uses light energy to abstract electrons from H(2)O, generating O(2) and a proton gradient subsequently used for ATP formation. It consists of a core antenna complex that captures photons, and an electron transfer chain that converts photonic excitation into a charge separation. This subunit is found at the monomer-monomer interface and is required for correct PSII assembly and/or dimerization. The polypeptide is Photosystem II reaction center protein L (Stigeoclonium helveticum (Green alga)).